The chain runs to 198 residues: Superoxide dismutase [Mn], mitochondrial (198 aa).

A Mn(2+)-binding site is contributed by His26. At Tyr34 the chain carries 3'-nitrotyrosine. N6-acetyllysine; alternate occurs at positions 44 and 51. 2 positions are modified to N6-succinyllysine; alternate: Lys44 and Lys51. A Mn(2+)-binding site is contributed by His74. The residue at position 90 (Lys90) is an N6-acetyllysine. N6-acetyllysine; alternate occurs at positions 98 and 106. Lys98 and Lys106 each carry N6-succinyllysine; alternate. 2 residues coordinate Mn(2+): Asp159 and His163. Residue Lys178 is modified to N6-acetyllysine.

This sequence belongs to the iron/manganese superoxide dismutase family. As to quaternary structure, homotetramer. Mn(2+) serves as cofactor. In terms of processing, nitrated under oxidative stress. Nitration coupled with oxidation inhibits the catalytic activity. Acetylation at Lys-98 decreases enzymatic activity. Deacetylated by SIRT3 upon exposure to ionizing radiations or after long fasting. Post-translationally, polyubiquitinated; leading to proteasomal degradation. Deubiquitinated by USP36 which increases protein stability.

The protein localises to the mitochondrion matrix. The enzyme catalyses 2 superoxide + 2 H(+) = H2O2 + O2. Destroys superoxide anion radicals which are normally produced within the cells and which are toxic to biological systems. The chain is Superoxide dismutase [Mn], mitochondrial (SOD2) from Callithrix jacchus (White-tufted-ear marmoset).